Here is a 284-residue protein sequence, read N- to C-terminus: tRNA pseudouridine synthase A (284 aa).

The active-site Nucleophile is Asp-62. A substrate-binding site is contributed by Tyr-120.

It belongs to the tRNA pseudouridine synthase TruA family. As to quaternary structure, homodimer.

The enzyme catalyses uridine(38/39/40) in tRNA = pseudouridine(38/39/40) in tRNA. Its function is as follows. Formation of pseudouridine at positions 38, 39 and 40 in the anticodon stem and loop of transfer RNAs. The sequence is that of tRNA pseudouridine synthase A from Thermosynechococcus vestitus (strain NIES-2133 / IAM M-273 / BP-1).